The following is a 210-amino-acid chain: Thymidylate kinase (210 aa).

Position 17 (Asp-17) interacts with dGMP. Asp-17 is a binding site for dTMP. Residues Arg-18, Ser-19, Gly-20, Lys-21, Ser-22, and Thr-23 each contribute to the ATP site. The dTMP site is built by Arg-47, Phe-74, Arg-78, Arg-99, and Tyr-107. Phe-74, Arg-78, Arg-99, Tyr-107, Ser-108, and Tyr-153 together coordinate dGMP. The tract at residues 143-155 is LID; the sequence is QNRSDYGEEIYEK. Arg-182 lines the ATP pocket.

The protein belongs to the thymidylate kinase family. In terms of assembly, homodimer. Binds two dTMP molecules per dimer. Binds only one dTGP molecule per dimer.

It catalyses the reaction dTMP + ATP = dTDP + ADP. The enzyme catalyses dGMP + ATP = dGDP + ADP. Its pathway is pyrimidine metabolism; dTTP biosynthesis. Inhibited by deoxyguanosine (dG), deoxythymidine (dT) and azidothymidine (AZT). In terms of biological role, catalyzes the phosphorylation of thymidine monophosphate (dTMP) to thymidine diphosphate (dTDP), the immediate precursor for the DNA building block dTTP. Can also phosphorylate dGMP and to a lesser extent GMP, dUMP and dIMP. Can use either ATP or dATP as phosphate donors in presence of Mg(2+). This is Thymidylate kinase from Plasmodium falciparum (isolate 3D7).